The following is a 257-amino-acid chain: DNA repair protein RecO (257 aa).

It belongs to the RecO family.

In terms of biological role, involved in DNA repair and RecF pathway recombination. The polypeptide is DNA repair protein RecO (Streptococcus thermophilus (strain ATCC BAA-491 / LMD-9)).